Reading from the N-terminus, the 444-residue chain is tRNA-2-methylthio-N(6)-dimethylallyladenosine synthase (444 aa).

Residues 8 to 122 (KTFYIETFGC…LAEMLVQIES (115 aa)) form the MTTase N-terminal domain. Residues C17, C53, C85, C160, C164, and C167 each coordinate [4Fe-4S] cluster. Residues 146–376 (RGNAHRGYIT…MEHQREIQRA (231 aa)) enclose the Radical SAM core domain. The region spanning 379-444 (RKHIGETIEV…PNSLVGELVG (66 aa)) is the TRAM domain.

It belongs to the methylthiotransferase family. MiaB subfamily. Monomer. The cofactor is [4Fe-4S] cluster.

The protein resides in the cytoplasm. It catalyses the reaction N(6)-dimethylallyladenosine(37) in tRNA + (sulfur carrier)-SH + AH2 + 2 S-adenosyl-L-methionine = 2-methylsulfanyl-N(6)-dimethylallyladenosine(37) in tRNA + (sulfur carrier)-H + 5'-deoxyadenosine + L-methionine + A + S-adenosyl-L-homocysteine + 2 H(+). Catalyzes the methylthiolation of N6-(dimethylallyl)adenosine (i(6)A), leading to the formation of 2-methylthio-N6-(dimethylallyl)adenosine (ms(2)i(6)A) at position 37 in tRNAs that read codons beginning with uridine. This Koribacter versatilis (strain Ellin345) protein is tRNA-2-methylthio-N(6)-dimethylallyladenosine synthase.